A 136-amino-acid polypeptide reads, in one-letter code: Protein NrdI (136 aa).

This sequence belongs to the NrdI family.

Probably involved in ribonucleotide reductase function. This Salmonella paratyphi B (strain ATCC BAA-1250 / SPB7) protein is Protein NrdI.